The following is a 470-amino-acid chain: E3 ubiquitin-protein ligase TRAIP (470 aa).

An RING-type; atypical zinc finger spans residues 7-50 (CTICSDFFDHSRDVAAIHCGHTFHLQCLIQWFETAPSRTCPQCR). Residues 76-277 (AEFLKNELDS…RKKLMILQGT (202 aa)) are a coiled coil. The interaction with CYLD stretch occupies residues 211-470 (LKEARKATGE…QPKLDTFLCQ (260 aa)). Residues 461–470 (QPKLDTFLCQ) carry the PIP-box motif.

This sequence belongs to the TRAIP family. Interacts (via PIP-box) with PCNA. Binds TRAF1, TRAF2, TRAF3, TRAF5 and TRAF6 is part of the receptor-TRAF signaling complex. May interact with CYLD; the C-terminus interacts with CYLD, however the interaction was not detected with the full-length protein. Interacts with POLK and POLN. Interacts with UIMC1. Post-translationally, autoubiquitinated. Sumoylated; sumoylation is required for nuclear localization. Sumoylation increases protein stability, possibly by preventing ubiquitination. In terms of tissue distribution, detected in testis and thymus, and at lower levels in spleen.

It is found in the nucleus. It localises to the nucleoplasm. Its subcellular location is the nucleolus. The protein localises to the chromosome. The protein resides in the cytoplasm. It is found in the perinuclear region. It catalyses the reaction S-ubiquitinyl-[E2 ubiquitin-conjugating enzyme]-L-cysteine + [acceptor protein]-L-lysine = [E2 ubiquitin-conjugating enzyme]-L-cysteine + N(6)-ubiquitinyl-[acceptor protein]-L-lysine.. It participates in protein modification; protein ubiquitination. Its function is as follows. E3 ubiquitin ligase required to protect genome stability in response to replication stress. Acts as a key regulator of interstrand cross-link repair, which takes place when both strands of duplex DNA are covalently tethered together, thereby blocking replication and transcription. During mitosis, controls the choice between the two pathways of replication-coupled interstrand-cross-link repair by mediating ubiquitination of MCM7 subunit of the CMG helicase complex. Short ubiquitin chains on MCM7 promote recruitment of DNA glycosylase NEIL3. If the interstrand cross-link cannot be cleaved by NEIL3, the ubiquitin chains continue to grow on MCM7, promoting the unloading of the CMG helicase complex by the VCP/p97 ATPase, enabling the Fanconi anemia DNA repair pathway. Only catalyzes ubiquitination of MCM7 when forks converge. Also involved in the repair of covalent DNA-protein cross-links (DPCs) during DNA synthesis: promotes ubiquitination of DPCs, leading to their degradation by the proteasome. Has also been proposed to play a role in promoting translesion synthesis by mediating the assembly of 'Lys-63'-linked poly-ubiquitin chains on the Y-family polymerase POLN in order to facilitate bypass of DNA lesions and preserve genomic integrity. The function in translesion synthesis is however controversial. Acts as a regulator of the spindle assembly checkpoint. Also acts as a negative regulator of innate immune signaling by inhibiting activation of NF-kappa-B mediated by TNF. Negatively regulates TLR3/4- and RIG-I-mediated IRF3 activation and subsequent IFNB1 production and cellular antiviral response by promoting 'Lys-48'-linked polyubiquitination of TNK1 leading to its proteasomal degradation. In Mus musculus (Mouse), this protein is E3 ubiquitin-protein ligase TRAIP.